The sequence spans 486 residues: UDP-N-acetylmuramate--L-alanine ligase (486 aa).

Residue Gly-126–Thr-132 participates in ATP binding.

Belongs to the MurCDEF family.

It is found in the cytoplasm. It catalyses the reaction UDP-N-acetyl-alpha-D-muramate + L-alanine + ATP = UDP-N-acetyl-alpha-D-muramoyl-L-alanine + ADP + phosphate + H(+). The protein operates within cell wall biogenesis; peptidoglycan biosynthesis. Cell wall formation. The sequence is that of UDP-N-acetylmuramate--L-alanine ligase from Pectobacterium carotovorum subsp. carotovorum (strain PC1).